The sequence spans 455 residues: DNA repair protein RadA (455 aa).

The segment at 11 to 28 adopts a C4-type zinc-finger fold; the sequence is CVGCGYVHPKWLGRCPEC. 97 to 104 contacts ATP; it reads GEPGIGKS. The RadA KNRFG motif motif lies at 250-254; it reads KNRFG. The tract at residues 350 to 455 is lon-protease-like; the sequence is DIYVNVAGGI…IAEIFSKAKA (106 aa).

This sequence belongs to the RecA family. RadA subfamily.

DNA-dependent ATPase involved in processing of recombination intermediates, plays a role in repairing DNA breaks. Stimulates the branch migration of RecA-mediated strand transfer reactions, allowing the 3' invading strand to extend heteroduplex DNA faster. Binds ssDNA in the presence of ADP but not other nucleotides, has ATPase activity that is stimulated by ssDNA and various branched DNA structures, but inhibited by SSB. Does not have RecA's homology-searching function. This is DNA repair protein RadA from Treponema pallidum (strain Nichols).